Here is a 670-residue protein sequence, read N- to C-terminus: Penicillin-binding protein activator LpoA (670 aa).

The N-terminal stretch at 1-26 (MLPSKVVHRKAVRTVPLLLAALIFAG) is a signal peptide. Residue cysteine 27 is the site of N-palmitoyl cysteine attachment. Residue cysteine 27 is the site of S-diacylglycerol cysteine attachment.

This sequence belongs to the LpoA family. Interacts with PBP1a.

It localises to the cell outer membrane. In terms of biological role, regulator of peptidoglycan synthesis that is essential for the function of penicillin-binding protein 1A (PBP1a). This Erwinia tasmaniensis (strain DSM 17950 / CFBP 7177 / CIP 109463 / NCPPB 4357 / Et1/99) protein is Penicillin-binding protein activator LpoA.